The sequence spans 385 residues: Phosphatidate cytidylyltransferase, mitochondrial (385 aa).

It belongs to the TAM41 family. Mg(2+) is required as a cofactor. Requires Co(2+) as cofactor. The cofactor is Cu(2+).

The protein localises to the mitochondrion inner membrane. It catalyses the reaction a 1,2-diacyl-sn-glycero-3-phosphate + CTP + H(+) = a CDP-1,2-diacyl-sn-glycerol + diphosphate. It functions in the pathway phospholipid metabolism; CDP-diacylglycerol biosynthesis; CDP-diacylglycerol from sn-glycerol 3-phosphate: step 3/3. Catalyzes the formation of CDP-diacylglycerol (CDP-DAG) from phosphatidic acid (PA) in the mitochondrial inner membrane. Required for the biosynthesis of the dimeric phospholipid cardiolipin, which stabilizes supercomplexes of the mitochondrial respiratory chain in the mitochondrial inner membrane. The protein is Phosphatidate cytidylyltransferase, mitochondrial (TAM41) of Saccharomyces cerevisiae (strain ATCC 204508 / S288c) (Baker's yeast).